Here is a 272-residue protein sequence, read N- to C-terminus: Proteasome subunit beta (272 aa).

Positions 1–47 (MSTGGDRLPEAFLRPGSSSFVEFLREVAPQSHPEHARPAGAGDVVHA) are cleaved as a propeptide — removed in mature form; by autocatalysis. Catalysis depends on Thr48, which acts as the Nucleophile.

It belongs to the peptidase T1B family. In terms of assembly, the 20S proteasome core is composed of 14 alpha and 14 beta subunits that assemble into four stacked heptameric rings, resulting in a barrel-shaped structure. The two inner rings, each composed of seven catalytic beta subunits, are sandwiched by two outer rings, each composed of seven alpha subunits. The catalytic chamber with the active sites is on the inside of the barrel. Has a gated structure, the ends of the cylinder being occluded by the N-termini of the alpha-subunits. Is capped by the proteasome-associated ATPase, ARC.

It localises to the cytoplasm. It catalyses the reaction Cleavage of peptide bonds with very broad specificity.. It participates in protein degradation; proteasomal Pup-dependent pathway. The formation of the proteasomal ATPase ARC-20S proteasome complex, likely via the docking of the C-termini of ARC into the intersubunit pockets in the alpha-rings, may trigger opening of the gate for substrate entry. Interconversion between the open-gate and close-gate conformations leads to a dynamic regulation of the 20S proteasome proteolysis activity. In terms of biological role, component of the proteasome core, a large protease complex with broad specificity involved in protein degradation. The sequence is that of Proteasome subunit beta from Beutenbergia cavernae (strain ATCC BAA-8 / DSM 12333 / CCUG 43141 / JCM 11478 / NBRC 16432 / NCIMB 13614 / HKI 0122).